We begin with the raw amino-acid sequence, 185 residues long: Transcription factor bHLH109 (185 aa).

The bHLH domain occupies 67-117 (RSMEYRMMMEKKRRKEIKDKVDILQGLMPNHCTKPDLASKLENIIEYIKSL).

It belongs to the bHLH protein family. As to quaternary structure, homodimer.

The protein resides in the nucleus. Transcription factor involved in somatic embryogenesis. Acts as a positive regulator of somatic embryo formation. Acts as a positive regulator of ECP63 by targeting its promoter and inducing its expression. In Arabidopsis thaliana (Mouse-ear cress), this protein is Transcription factor bHLH109 (BHLH109).